The sequence spans 230 residues: Large ribosomal subunit protein uL1 (230 aa).

It belongs to the universal ribosomal protein uL1 family. Part of the 50S ribosomal subunit.

Its function is as follows. Binds directly to 23S rRNA. The L1 stalk is quite mobile in the ribosome, and is involved in E site tRNA release. Functionally, protein L1 is also a translational repressor protein, it controls the translation of the L11 operon by binding to its mRNA. In Methylobacillus flagellatus (strain ATCC 51484 / DSM 6875 / VKM B-1610 / KT), this protein is Large ribosomal subunit protein uL1.